The primary structure comprises 954 residues: Centrosomal protein of 112 kDa (954 aa).

Positions 276–954 (QKHDAEVQKI…EELTTYQSRR (679 aa)) form a coiled coil.

It localises to the cytoplasm. It is found in the cytoskeleton. The protein resides in the microtubule organizing center. The protein localises to the centrosome. The protein is Centrosomal protein of 112 kDa (Cep112) of Mus musculus (Mouse).